Here is a 384-residue protein sequence, read N- to C-terminus: Magnesium transporter MRS2-I (384 aa).

Helical transmembrane passes span 319-339 and 356-376; these read LFLSSGTVCLSLYSLVAGIFG and WVVLVSGLFCAFMFVSIVAYA. A Required for magnesium transport activity motif is present at residues 339–341; the sequence is GMN.

The protein belongs to the CorA metal ion transporter (MIT) (TC 1.A.35.5) family.

It is found in the membrane. Functionally, magnesium transporter that may mediate the influx of magnesium. The chain is Magnesium transporter MRS2-I (MRS2-I) from Oryza sativa subsp. japonica (Rice).